The chain runs to 283 residues: Bifunctional protein FolD (283 aa).

NADP(+)-binding positions include 166–168 (GRS), S191, and I232.

It belongs to the tetrahydrofolate dehydrogenase/cyclohydrolase family. In terms of assembly, homodimer.

The enzyme catalyses (6R)-5,10-methylene-5,6,7,8-tetrahydrofolate + NADP(+) = (6R)-5,10-methenyltetrahydrofolate + NADPH. The catalysed reaction is (6R)-5,10-methenyltetrahydrofolate + H2O = (6R)-10-formyltetrahydrofolate + H(+). The protein operates within one-carbon metabolism; tetrahydrofolate interconversion. Functionally, catalyzes the oxidation of 5,10-methylenetetrahydrofolate to 5,10-methenyltetrahydrofolate and then the hydrolysis of 5,10-methenyltetrahydrofolate to 10-formyltetrahydrofolate. The polypeptide is Bifunctional protein FolD (Rickettsia bellii (strain RML369-C)).